Consider the following 378-residue polypeptide: Serpin B6 (378 aa).

Methionine 1 is modified (N-acetylmethionine). Lysine 196 is modified (N6-acetyllysine).

The protein belongs to the serpin family. Ov-serpin subfamily. Forms a complex with the monomeric form of beta-tryptase. As to expression, brain.

It is found in the cytoplasm. Its function is as follows. Inhibitor of cathepsin G, kallikrein-8 and thrombin. May play an important role in the inner ear in the protection against leakage of lysosomal content during stress. May be involved in the regulation of serine proteinases present in the brain or extravasated from the blood. The protein is Serpin B6 (SERPINB6) of Bos taurus (Bovine).